A 229-amino-acid chain; its full sequence is Urease accessory protein UreF (229 aa).

It belongs to the UreF family. UreD, UreF and UreG form a complex that acts as a GTP-hydrolysis-dependent molecular chaperone, activating the urease apoprotein by helping to assemble the nickel containing metallocenter of UreC. The UreE protein probably delivers the nickel.

It localises to the cytoplasm. Its function is as follows. Required for maturation of urease via the functional incorporation of the urease nickel metallocenter. The protein is Urease accessory protein UreF of Nostoc sp. (strain PCC 7120 / SAG 25.82 / UTEX 2576).